The sequence spans 347 residues: Holliday junction branch migration complex subunit RuvB (347 aa).

Positions 1–181 (MTRNSLLNPE…FGIPVRLQFY (181 aa)) are large ATPase domain (RuvB-L). ATP-binding residues include leucine 20, arginine 21, glycine 62, lysine 65, threonine 66, threonine 67, arginine 171, tyrosine 181, and arginine 218. Residue threonine 66 participates in Mg(2+) binding. Residues 182–252 (SIEELRQVIT…IADEALNRLE (71 aa)) are small ATPAse domain (RuvB-S). The tract at residues 255–347 (KLGLDLMDRR…SEIKNQPGLL (93 aa)) is head domain (RuvB-H). Residues arginine 291, arginine 310, and arginine 315 each coordinate DNA.

This sequence belongs to the RuvB family. In terms of assembly, homohexamer. Forms an RuvA(8)-RuvB(12)-Holliday junction (HJ) complex. HJ DNA is sandwiched between 2 RuvA tetramers; dsDNA enters through RuvA and exits via RuvB. An RuvB hexamer assembles on each DNA strand where it exits the tetramer. Each RuvB hexamer is contacted by two RuvA subunits (via domain III) on 2 adjacent RuvB subunits; this complex drives branch migration. In the full resolvosome a probable DNA-RuvA(4)-RuvB(12)-RuvC(2) complex forms which resolves the HJ.

The protein resides in the cytoplasm. It carries out the reaction ATP + H2O = ADP + phosphate + H(+). Functionally, the RuvA-RuvB-RuvC complex processes Holliday junction (HJ) DNA during genetic recombination and DNA repair, while the RuvA-RuvB complex plays an important role in the rescue of blocked DNA replication forks via replication fork reversal (RFR). RuvA specifically binds to HJ cruciform DNA, conferring on it an open structure. The RuvB hexamer acts as an ATP-dependent pump, pulling dsDNA into and through the RuvAB complex. RuvB forms 2 homohexamers on either side of HJ DNA bound by 1 or 2 RuvA tetramers; 4 subunits per hexamer contact DNA at a time. Coordinated motions by a converter formed by DNA-disengaged RuvB subunits stimulates ATP hydrolysis and nucleotide exchange. Immobilization of the converter enables RuvB to convert the ATP-contained energy into a lever motion, pulling 2 nucleotides of DNA out of the RuvA tetramer per ATP hydrolyzed, thus driving DNA branch migration. The RuvB motors rotate together with the DNA substrate, which together with the progressing nucleotide cycle form the mechanistic basis for DNA recombination by continuous HJ branch migration. Branch migration allows RuvC to scan DNA until it finds its consensus sequence, where it cleaves and resolves cruciform DNA. This Zymomonas mobilis subsp. mobilis (strain ATCC 31821 / ZM4 / CP4) protein is Holliday junction branch migration complex subunit RuvB.